Consider the following 296-residue polypeptide: Putative ribose uptake protein RbsU (296 aa).

9 helical membrane-spanning segments follow: residues 2-24 (NGIALLIGLGPLLGWGLFPTIAS), 34-51 (IIGTTFGTFIFALVYNLV), 58-80 (SGAALIWSIISGIGWASAQILTF), 90-112 (RAMPITTAFQLLGTSLWGVFALG), 121-139 (LVGFLALALIILGAWMTTW), 182-201 (AFLPQAIGMCLVAICYAVYL), 221-240 (IISGFFFAFAALTYLISAQP), 245-267 (LATGFILSQTSVVLATLTGIWFL), and 276-295 (MVVTLIGLAIIIGAATMTVI).

This sequence belongs to the GRP transporter (TC 2.A.7.5) family.

It localises to the cell membrane. In terms of biological role, could be involved in the uptake of ribose. The chain is Putative ribose uptake protein RbsU (rbsU) from Lactobacillus johnsonii (strain CNCM I-12250 / La1 / NCC 533).